The sequence spans 206 residues: dTTP/UTP pyrophosphatase (206 aa).

Catalysis depends on D87, which acts as the Proton acceptor.

Belongs to the Maf family. YhdE subfamily. The cofactor is a divalent metal cation.

It localises to the cytoplasm. The catalysed reaction is dTTP + H2O = dTMP + diphosphate + H(+). The enzyme catalyses UTP + H2O = UMP + diphosphate + H(+). Its function is as follows. Nucleoside triphosphate pyrophosphatase that hydrolyzes dTTP and UTP. May have a dual role in cell division arrest and in preventing the incorporation of modified nucleotides into cellular nucleic acids. This is dTTP/UTP pyrophosphatase from Aromatoleum aromaticum (strain DSM 19018 / LMG 30748 / EbN1) (Azoarcus sp. (strain EbN1)).